A 154-amino-acid polypeptide reads, in one-letter code: Deoxyuridine 5'-triphosphate nucleotidohydrolase (154 aa).

Substrate is bound by residues 70–72 (RSG), asparagine 83, 87–89 (LID), and methionine 97.

Belongs to the dUTPase family. The cofactor is Mg(2+).

It catalyses the reaction dUTP + H2O = dUMP + diphosphate + H(+). It participates in pyrimidine metabolism; dUMP biosynthesis; dUMP from dCTP (dUTP route): step 2/2. Its function is as follows. This enzyme is involved in nucleotide metabolism: it produces dUMP, the immediate precursor of thymidine nucleotides and it decreases the intracellular concentration of dUTP so that uracil cannot be incorporated into DNA. The polypeptide is Deoxyuridine 5'-triphosphate nucleotidohydrolase (Buchnera aphidicola subsp. Acyrthosiphon pisum (strain 5A)).